The primary structure comprises 1067 residues: MNLQPITDLLKALNSGNTTTIQQAEQLYADYKNHQPDQLVNSFIVLIRTSQDELLRSYPPVLLRTLVNGNDSGNILKGLKPETLVTLKTELMFAVREEPKNHIRHSILNVIAILAIQLVPEQKWPEILSFIIESSSSPEENLRESSFYLIGAIIDDSRVAETLAPHFDKFALLVEKGLNDPSAKVQVSALETVSTFIDANPEKAEVFKPLIPAMLNTIQKTIESNLEKEAQKGILTFIIIAQYHSDWFKTNFDMIFKVFFQFLEHQSLEDETKHACLHFFLTFAEFKSSIMKKKLYLEPIVLLLLKWMSSVEDMDLKDWNSLDTEPSDDDDSNVAFEAIEALSHCVSKGLWEFFLQCAPTLLNSGNWKERYTGLMTLSSISEGCEKQIKTNFKLIIQSILPLANDSHPRVRFAFFYCLGSFASYLKREMQDLYKTLIPVSLEHLNDPFPRVTISNCEFLTLFLDEIKPNRVKEFKDQFLGRLSPLLQNENYKIVQHSLNAFSSVVDGIGEEFTQHYSEIMPFLIKILRTQTSVETKTLRGRAIETISLVGLAVGKKVFLNDCIQIIQYVSSLEKFKDDDPQVDFFLRAFTRFAQCLGEDFIPYLKYSMSPLMDAINGKVDSSVENGEDFSDESNNSGSIVMENKAMALEMVSIYAMELKHHLFPYVEQLYKGSIELVDFPFSSLVAIQAVNLIPFLVKISKQHFEAVGGLKDGMKAEFTSRLFLDSYERMAASIKTESEPDTLSAKLKALSDLMDIGGQCEQADRILSLTFEVANESFGTLQELETEYQENIDEEDEDADESPEREIIDDAYNSLAMVLGEVCIQFKEKAVPYIATVLPAMIELIETAPSVEIKTSMICILDDLIENGGQKAFELYPHIIKPMMNCTLPNLDPSLIQSAVFGIGLAAENGKDYFTPFLMESLQLINNVIVSVNSVQEQDDDLIAARDNAISAMGRIITNLPQHLGNNFPQTIALWLSYLPIQDDGEAGSIIKSLCTLIRDFSQQIMTQQYIVKVLEIIAVGLHKKAVNPDDKQIISLALRSQESLVAQSLFQLSAENQAILANFFKN.

HEAT repeat units lie at residues 3-34 (LQPI…YKNH), 42-75 (SFIV…SGNI), 93-120 (FAVR…QLVP), 125-152 (PEIL…LIGA), 164-197 (APHF…STFI), 206-243 (VFKP…IAQY), 251-286 (NFDM…FAEF), 295-347 (LYLE…HCVS), 349-381 (GLWE…SSIS), 385-425 (EKQI…ASYL), 427-466 (REMQ…LDEI), 468-508 (PNRV…VDGI), 510-553 (EEFT…GLAV), 555-596 (KKVF…AQCL), 598-658 (EDFI…AMEL), 661-703 (HLFP…SKQH), 718-757 (FTSR…MDIG), 763-826 (ADRI…CIQF), 832-869 (PYIA…ENGG), 876-909 (YPHI…AAEN), 917-960 (FLME…ITNL), 969-999 (PQTI…TLIR), 1008-1040 (QQYI…LALR), and 1041-1064 (SQES…LANF).

The protein belongs to the importin beta family. Importin beta-3 subfamily.

It is found in the cytoplasm. The protein localises to the nucleus. Functions in nuclear protein import as nuclear transport receptor. Serves as receptor for nuclear localization signals (NLS) in cargo substrates. In Dictyostelium discoideum (Social amoeba), this protein is Probable importin-5 homolog.